The primary structure comprises 245 residues: tRNA pseudouridine synthase A 2 (245 aa).

Residue Asp53 is the Nucleophile of the active site. Tyr111 provides a ligand contact to substrate.

The protein belongs to the tRNA pseudouridine synthase TruA family. Homodimer.

It catalyses the reaction uridine(38/39/40) in tRNA = pseudouridine(38/39/40) in tRNA. In terms of biological role, formation of pseudouridine at positions 38, 39 and 40 in the anticodon stem and loop of transfer RNAs. In Bacillus cereus (strain ATCC 14579 / DSM 31 / CCUG 7414 / JCM 2152 / NBRC 15305 / NCIMB 9373 / NCTC 2599 / NRRL B-3711), this protein is tRNA pseudouridine synthase A 2.